A 264-amino-acid chain; its full sequence is MALASVLQRPMPVNQHGFFGLGGGADLLDLGPGSPGDGLSLAAPSWGVPEEPRIEMLHGTTTLAFKFLHGVIVAADSRATAGAYIASQTVKKVIEINPYLLGTMAGGAADCSFWERLLARQCRIYELRNKERISVAAASKLLANMVYQYKGMGLSMGTMICGWDKRGPGLYYVDSEGNRISGTAFSVGSGSVYAYGVMDRGYSYDLKVEEAYDLARRAIYQATYRDAYSGGAVNLYHVREDGWIRVSSDNVADLHDKYSSVSVP.

Positions 1–59 (MALASVLQRPMPVNQHGFFGLGGGADLLDLGPGSPGDGLSLAAPSWGVPEEPRIEMLHG) are cleaved as a propeptide — removed in mature form. Thr60 acts as the Nucleophile in catalysis. Ala108 lines the bortezomib pocket.

This sequence belongs to the peptidase T1B family. In terms of assembly, the 26S proteasome consists of a 20S proteasome core and two 19S regulatory subunits. The 20S proteasome core is a barrel-shaped complex made of 28 subunits that are arranged in four stacked rings. The two outer rings are each formed by seven alpha subunits, and the two inner rings are formed by seven beta subunits. The proteolytic activity is exerted by three beta-subunits PSMB5, PSMB6 and PSMB7. Directly interacts with POMP. Interacts with ABCB1 and TAP1. In terms of tissue distribution, expressed in uterus at the embryo implantation site.

It is found in the cytoplasm. Its subcellular location is the nucleus. It catalyses the reaction Cleavage of peptide bonds with very broad specificity.. Its function is as follows. Component of the 20S core proteasome complex involved in the proteolytic degradation of most intracellular proteins. This complex plays numerous essential roles within the cell by associating with different regulatory particles. Associated with two 19S regulatory particles, forms the 26S proteasome and thus participates in the ATP-dependent degradation of ubiquitinated proteins. The 26S proteasome plays a key role in the maintenance of protein homeostasis by removing misfolded or damaged proteins that could impair cellular functions, and by removing proteins whose functions are no longer required. Associated with the PA200 or PA28, the 20S proteasome mediates ubiquitin-independent protein degradation. This type of proteolysis is required in several pathways including spermatogenesis (20S-PA200 complex) or generation of a subset of MHC class I-presented antigenic peptides (20S-PA28 complex). Within the 20S core complex, PSMB5 displays a chymotrypsin-like activity. The chain is Proteasome subunit beta type-5 (Psmb5) from Mus musculus (Mouse).